A 475-amino-acid polypeptide reads, in one-letter code: Putative amidase AmiD (475 aa).

Catalysis depends on charge relay system residues Lys93 and Ser166. The active-site Acyl-ester intermediate is the Ser190.

This sequence belongs to the amidase family.

It catalyses the reaction a monocarboxylic acid amide + H2O = a monocarboxylate + NH4(+). This Mycobacterium bovis (strain ATCC BAA-935 / AF2122/97) protein is Putative amidase AmiD (amiD).